Here is a 124-residue protein sequence, read N- to C-terminus: ATP synthase epsilon chain (124 aa).

This sequence belongs to the ATPase epsilon chain family. In terms of assembly, F-type ATPases have 2 components, CF(1) - the catalytic core - and CF(0) - the membrane proton channel. CF(1) has five subunits: alpha(3), beta(3), gamma(1), delta(1), epsilon(1). CF(0) has three main subunits: a, b and c.

The protein localises to the cell membrane. Functionally, produces ATP from ADP in the presence of a proton gradient across the membrane. The sequence is that of ATP synthase epsilon chain from Corynebacterium efficiens (strain DSM 44549 / YS-314 / AJ 12310 / JCM 11189 / NBRC 100395).